The primary structure comprises 184 residues: Ribosome-recycling factor (184 aa).

It belongs to the RRF family.

The protein localises to the cytoplasm. Its function is as follows. Responsible for the release of ribosomes from messenger RNA at the termination of protein biosynthesis. May increase the efficiency of translation by recycling ribosomes from one round of translation to another. In Aquifex aeolicus (strain VF5), this protein is Ribosome-recycling factor.